Consider the following 735-residue polypeptide: MQYSIEVNNQVEIFDLNKVAKQAAGAVMLRVKNTVVLATVARDDVQVEEDFLPLTVQYIEKAYAAGRIPGGYVKRETKPGDFETLTARIIDRSLRPLFPKGYAYPTQIVVMVLSADPEVDLQVVGLNAASVALYLSDIPVNRPVCGVRVGYIDDKFVINPSNSELKSSALDLYVAGTKDELLMIEMRSIAQQSSQIIPIIAIDPMMDPSLNDSITQKQDMNEFSEDRIVEAIDFAGKAILRASNAYEEAFKEHKKEDAILELKPEIENENIAIYIDKFYKNDVKNAINQMAKSERASELGKIAKQIASDEVAQKEGWEEGVISNVLGKYKKKIVREQIINEGVRADGRALDEVRPISIETNVLPNAHGSCLFTRGQTQALVVATLGTDGDAQMYDILTEKTALIEKFMFNYNFPGFSVGEASPLKAPGRRELGHGNLAKRALAPSIDINSPYTIRLVSEILESNGSSSMASVCGGALALRAAGVDTQKLVAGVAMGLIFEGDKHAVLTDIMGLEDHDGDMDFKVAGSSDGITALQMDIKLGGISLEVLKEALYQAKRGREHILNLMHQADSKIEVNEDVLPKLELFSVDPSKIVDIIGQAGKTIKEIIERFEVSIDLDREKGEVKIAGGAKKNVDAAKDYIISITSKENSRGFGKKPHGHDRRDKDRQKPTFNIGDEFDGVVKSVVDFGAFIELKDGVDGLLHISKIKTPLNVGDRLKVCVSEQKGNKISLSLVE.

2 residues coordinate Mg(2+): D515 and D521. The KH domain maps to 581–641 (PKLELFSVDP…KNVDAAKDYI (61 aa)). The segment at 649-671 (NSRGFGKKPHGHDRRDKDRQKPT) is disordered. The region spanning 675–734 (GDEFDGVVKSVVDFGAFIELKDGVDGLLHISKIKTPLNVGDRLKVCVSEQKGNKISLSLV) is the S1 motif domain.

This sequence belongs to the polyribonucleotide nucleotidyltransferase family. Mg(2+) serves as cofactor.

It is found in the cytoplasm. It carries out the reaction RNA(n+1) + phosphate = RNA(n) + a ribonucleoside 5'-diphosphate. Involved in mRNA degradation. Catalyzes the phosphorolysis of single-stranded polyribonucleotides processively in the 3'- to 5'-direction. This is Polyribonucleotide nucleotidyltransferase from Campylobacter curvus (strain 525.92).